The following is a 114-amino-acid chain: Nuclear transition protein 2 (114 aa).

Residues 1-114 (MDTKMQSLPT…KRRSSGRRYK (114 aa)) form a disordered region. The Zn(2+) site is built by H12, H14, H16, H24, C29, C31, C35, and C38. Residues 16–25 (HSSSRPQSHT) show a composition bias toward low complexity. A Nuclear localization signal motif is present at residues 87-95 (GKVSKRKAV). Basic residues predominate over residues 90 to 114 (SKRKAVRRRKRTHRAKRRSSGRRYK). At T101 the chain carries Phosphothreonine; by PKA. S109 carries the phosphoserine; by PKA modification.

It belongs to the nuclear transition protein 2 family. As to expression, testis.

Its subcellular location is the nucleus. The protein localises to the nucleolus. It localises to the chromosome. In terms of biological role, plays a key role in the replacement of histones to protamine in the elongating spermatids of mammals. In condensing spermatids, loaded onto the nucleosomes, where it promotes the recruitment and processing of protamines, which are responsible for histone eviction. This is Nuclear transition protein 2 (Tnp2) from Rattus norvegicus (Rat).